Here is a 107-residue protein sequence, read N- to C-terminus: DNA polymerase delta subunit 4 (107 aa).

The PCNA-interaction protein motif (PIP box) signature appears at Met1–Arg16. The segment at Met1–Ala44 is disordered. Residues Lys15–Leu28 show a composition bias toward basic and acidic residues.

Belongs to the DNA polymerase delta subunit 4 family. Component of the tetrameric DNA polymerase delta complex (Pol-delta4), which consists of POLD1/p125, POLD2/p50, POLD3/p66/p68 and POLD4/p12, with POLD1 bearing DNA polymerase and 3' to 5' proofreading exonuclease activities. Within this complex, directly interacts with POLD1 and POLD2. Directly interacts with PCNA, as do POLD1 and POLD3; this interaction stimulates Pol-delta4 polymerase activity. As POLD1 and POLD2, directly interacts with WRNIP1; this interaction stimulates DNA polymerase delta-mediated DNA synthesis, independently of the presence of PCNA. This stimulation may be due predominantly to an increase of initiation frequency and also to increased processivity. Upon genotoxic stress induced by DNA damaging agents or by replication stress, POLD4 is proteolytically degraded and Pol-delta4 is converted into a trimeric form of the complex (Pol-delta3) which has an increased proofreading activity. The DNA polymerase delta complex interacts with POLDIP2; this interaction is probably mediated through direct binding to POLD2. Ubiquitinated; undergoes 'Lys-48'-linked ubiquitination in response to UV irradiation, leading to proteasomal degradation. This modification is partly mediated by RNF8 and by the DCX(DTL) E3 ubiquitin ligase complex (also called CRL4(CDT2)). Efficient degradation requires the presence of PCNA and is required for the inhibition of fork progression after DNA damage.

The protein resides in the nucleus. Functionally, as a component of the tetrameric DNA polymerase delta complex (Pol-delta4), plays a role in high fidelity genome replication and repair. Within this complex, increases the rate of DNA synthesis and decreases fidelity by regulating POLD1 polymerase and proofreading 3' to 5' exonuclease activity. Pol-delta4 participates in Okazaki fragment processing, through both the short flap pathway, as well as a nick translation system. Under conditions of DNA replication stress, required for the repair of broken replication forks through break-induced replication (BIR), a mechanism that may induce segmental genomic duplications of up to 200 kb. Involved in Pol-delta4 translesion synthesis (TLS) of templates carrying O6-methylguanine or abasic sites. Its degradation in response to DNA damage is required for the inhibition of fork progression and cell survival. The protein is DNA polymerase delta subunit 4 (POLD4) of Homo sapiens (Human).